The sequence spans 697 residues: Long-chain-fatty-acid--CoA ligase 6 (697 aa).

The helical; Signal-anchor for type III membrane protein transmembrane segment at 25-45 (LSATTLVSVGALAAVLAYWLT) threads the bilayer. Topologically, residues 46–697 (HRPKALQPPC…QIEELYLVSV (652 aa)) are cytoplasmic.

Belongs to the ATP-dependent AMP-binding enzyme family. Requires Mg(2+) as cofactor.

Its subcellular location is the mitochondrion outer membrane. The protein localises to the peroxisome membrane. It localises to the microsome membrane. The protein resides in the endoplasmic reticulum membrane. It carries out the reaction a long-chain fatty acid + ATP + CoA = a long-chain fatty acyl-CoA + AMP + diphosphate. It catalyses the reaction (5Z,8Z,11Z,14Z)-eicosatetraenoate + ATP + CoA = (5Z,8Z,11Z,14Z)-eicosatetraenoyl-CoA + AMP + diphosphate. The catalysed reaction is 15-hydroxy-(5Z,8Z,11Z,13E)-eicosatetraenoate + ATP + CoA = 15-hydroxy-(5Z,8Z,11Z,13E)-eicosatetraenoyl-CoA + AMP + diphosphate. The enzyme catalyses 12-hydroxy-(5Z,8Z,10E,14Z)-eicosatetraenoate + ATP + CoA = 12-hydroxy-(5Z,8Z,10E,14Z)-eicosatetraenoyl-CoA + AMP + diphosphate. It carries out the reaction 5-hydroxy-(6E,8Z,11Z,14Z)-eicosatetraenoate + ATP + CoA = 5-hydroxy-(6E,8Z,11Z,14Z)-eicosatetraenoyl-CoA + AMP + diphosphate. It catalyses the reaction hexadecanoate + ATP + CoA = hexadecanoyl-CoA + AMP + diphosphate. The catalysed reaction is (E)-hexadec-2-enoate + ATP + CoA = (2E)-hexadecenoyl-CoA + AMP + diphosphate. In terms of biological role, catalyzes the conversion of long-chain fatty acids to their active form acyl-CoA for both synthesis of cellular lipids, and degradation via beta-oxidation. Plays an important role in fatty acid metabolism in brain and the acyl-CoAs produced may be utilized exclusively for the synthesis of the brain lipid. This Mus musculus (Mouse) protein is Long-chain-fatty-acid--CoA ligase 6 (Acsl6).